The sequence spans 388 residues: Flap endonuclease 1 (388 aa).

The segment at 1–104 is N-domain; it reads MGILGLSKLI…GELAKRAERR (104 aa). A Mg(2+)-binding site is contributed by D34. Residues R47 and R70 each coordinate DNA. Positions 86, 158, 160, 179, and 181 each coordinate Mg(2+). Positions 122-253 are I-domain; it reads EIEKFNRRLV…KRAIELINSY (132 aa). Residue E158 participates in DNA binding. DNA-binding residues include G231 and D233. D233 serves as a coordination point for Mg(2+). Residues 336-344 are interaction with PCNA; sequence TQVRLDSFF. Residues 355–388 are disordered; sequence AAAKRKAEEAKKSANNKKAKIGGGGGAGRGRRPK.

It belongs to the XPG/RAD2 endonuclease family. FEN1 subfamily. As to quaternary structure, interacts with PCNA. Three molecules of FEN1 bind to one PCNA trimer with each molecule binding to one PCNA monomer. PCNA stimulates the nuclease activity without altering cleavage specificity. Requires Mg(2+) as cofactor. In terms of processing, phosphorylated. Phosphorylation upon DNA damage induces relocalization to the nuclear plasma.

It localises to the nucleus. Its subcellular location is the nucleolus. It is found in the nucleoplasm. The protein localises to the mitochondrion. Functionally, structure-specific nuclease with 5'-flap endonuclease and 5'-3' exonuclease activities involved in DNA replication and repair. During DNA replication, cleaves the 5'-overhanging flap structure that is generated by displacement synthesis when DNA polymerase encounters the 5'-end of a downstream Okazaki fragment. It enters the flap from the 5'-end and then tracks to cleave the flap base, leaving a nick for ligation. Also involved in the long patch base excision repair (LP-BER) pathway, by cleaving within the apurinic/apyrimidinic (AP) site-terminated flap. Acts as a genome stabilization factor that prevents flaps from equilibrating into structures that lead to duplications and deletions. Also possesses 5'-3' exonuclease activity on nicked or gapped double-stranded DNA, and exhibits RNase H activity. Also involved in replication and repair of rDNA and in repairing mitochondrial DNA. The polypeptide is Flap endonuclease 1 (Drosophila willistoni (Fruit fly)).